Reading from the N-terminus, the 206-residue chain is Protein GET1 (206 aa).

The Lumenal portion of the chain corresponds to 1-4 (MPSL). The chain crosses the membrane as a helical span at residues 5-24 (LITVLFLNVIIYVINTVGAA). At 25-110 (TVDGLLWLLY…TFDMTIKIAR (86 aa)) the chain is on the cytoplasmic side. A coiled-coil region spans residues 75–100 (AKLRRRHDKAMEAYEAKNNELTQSKS). The chain crosses the membrane as a helical span at residues 111–131 (WAATSGLMLFLQFWYSKTPIF). The Lumenal portion of the chain corresponds to 132–155 (TLPPGWIPWQVQWVLSFPRAPMGT). Residues 156–172 (VSIQIWGGACATVVALV) traverse the membrane as a helical segment. Residues 173–206 (GDAMRASLAYVSKPKIDRIKLGATMEGKEGKKRQ) lie on the Cytoplasmic side of the membrane.

This sequence belongs to the WRB/GET1 family. Interacts with GET3.

It is found in the endoplasmic reticulum membrane. Functionally, required for the post-translational delivery of tail-anchored (TA) proteins to the endoplasmic reticulum. Acts as a membrane receptor for soluble GET3, which recognizes and selectively binds the transmembrane domain of TA proteins in the cytosol. The polypeptide is Protein GET1 (Ajellomyces capsulatus (strain NAm1 / WU24) (Darling's disease fungus)).